Here is a 562-residue protein sequence, read N- to C-terminus: Protoporphyrinogen oxidase 1, chloroplastic (562 aa).

Residues 1 to 48 (MSAMALSSTMALSLPQSSMSLSHCRHNRITILIPSSSLRRRGGSSIRC) constitute a chloroplast transit peptide. FAD is bound by residues 88 to 93 (GGGISG), 115 to 116 (EA), and 137 to 140 (GPNS). Residues 274–302 (TLKTIQERKDNPKPPRDPRLPKPKGQTVG) form a disordered region. Over residues 278-293 (IQERKDNPKPPRDPRL) the composition is skewed to basic and acidic residues. Residues V323 and 536-538 (VAL) contribute to the FAD site.

This sequence belongs to the protoporphyrinogen/coproporphyrinogen oxidase family. Protoporphyrinogen oxidase subfamily. FAD is required as a cofactor.

It localises to the plastid. The protein resides in the chloroplast thylakoid membrane. The protein localises to the chloroplast inner membrane. The enzyme catalyses protoporphyrinogen IX + 3 O2 = protoporphyrin IX + 3 H2O2. Its pathway is porphyrin-containing compound metabolism; protoporphyrin-IX biosynthesis; protoporphyrin-IX from protoporphyrinogen-IX: step 1/1. It functions in the pathway porphyrin-containing compound metabolism; chlorophyll biosynthesis. Catalyzes the 6-electron oxidation of protoporphyrinogen-IX to form protoporphyrin-IX. The polypeptide is Protoporphyrinogen oxidase 1, chloroplastic (Spinacia oleracea (Spinach)).